Here is an 81-residue protein sequence, read N- to C-terminus: Defensin-like protein 115 (81 aa).

The signal sequence occupies residues 1 to 24 (MAITKKMLVVFLLAFLFVTSSVHC). 4 cysteine pairs are disulfide-bonded: C40/C78, C46/C69, C54/C76, and C58/C77.

Belongs to the DEFL family.

The protein resides in the secreted. This chain is Defensin-like protein 115, found in Arabidopsis thaliana (Mouse-ear cress).